Reading from the N-terminus, the 697-residue chain is DNA ligase (697 aa).

Residues 44-48 (DGEFD), 93-94 (SL), and E123 each bind NAD(+). The active-site N6-AMP-lysine intermediate is K125. Residues R146, E186, K302, and K326 each contribute to the NAD(+) site. 4 residues coordinate Zn(2+): C420, C423, C439, and C445. The BRCT domain occupies 609–697 (SIPRNLEGLS…GPDAVTDSGV (89 aa)).

The protein belongs to the NAD-dependent DNA ligase family. LigA subfamily. It depends on Mg(2+) as a cofactor. Mn(2+) is required as a cofactor.

The catalysed reaction is NAD(+) + (deoxyribonucleotide)n-3'-hydroxyl + 5'-phospho-(deoxyribonucleotide)m = (deoxyribonucleotide)n+m + AMP + beta-nicotinamide D-nucleotide.. DNA ligase that catalyzes the formation of phosphodiester linkages between 5'-phosphoryl and 3'-hydroxyl groups in double-stranded DNA using NAD as a coenzyme and as the energy source for the reaction. It is essential for DNA replication and repair of damaged DNA. The polypeptide is DNA ligase (Rhodococcus opacus (strain B4)).